Consider the following 210-residue polypeptide: Large ribosomal subunit protein uL3 (210 aa).

A disordered region spans residues 125–151 (HGFGGGPRTHGQSDRLRAPGSIGAGTD).

The protein belongs to the universal ribosomal protein uL3 family. In terms of assembly, part of the 50S ribosomal subunit. Forms a cluster with proteins L14 and L19.

One of the primary rRNA binding proteins, it binds directly near the 3'-end of the 23S rRNA, where it nucleates assembly of the 50S subunit. The chain is Large ribosomal subunit protein uL3 from Roseiflexus sp. (strain RS-1).